A 988-amino-acid chain; its full sequence is UvrABC system protein A (988 aa).

ATP is bound at residue 33–40 (GLSGSGKS). The C4-type zinc finger occupies 255-282 (CPVCDYSLPELEPRLFSFNAPVGACPSC). ABC transporter domains follow at residues 312-589 (WDRR…PRSL) and 609-938 (PNPK…QFLA). 642–649 (GVSGSGKS) is an ATP binding site. A C4-type zinc finger spans residues 741-767 (CEACQGDGMIKVEMHFLPDVYVPCDVC). A disordered region spans residues 948 to 988 (ETRPAAMANKPDARPPRKVKPEKVAKATKTATKKTAKKKAS). The span at 958-972 (PDARPPRKVKPEKVA) shows a compositional bias: basic and acidic residues. Over residues 978 to 988 (ATKKTAKKKAS) the composition is skewed to basic residues.

The protein belongs to the ABC transporter superfamily. UvrA family. In terms of assembly, forms a heterotetramer with UvrB during the search for lesions.

It localises to the cytoplasm. In terms of biological role, the UvrABC repair system catalyzes the recognition and processing of DNA lesions. UvrA is an ATPase and a DNA-binding protein. A damage recognition complex composed of 2 UvrA and 2 UvrB subunits scans DNA for abnormalities. When the presence of a lesion has been verified by UvrB, the UvrA molecules dissociate. This Xanthomonas campestris pv. campestris (strain ATCC 33913 / DSM 3586 / NCPPB 528 / LMG 568 / P 25) protein is UvrABC system protein A.